A 191-amino-acid chain; its full sequence is MFLIVGLGNPGSKYDNTRHNIGFEVIDNISNEYNIDINRQKFKGVYGEGFIANNKVILLKPTTYMNLSGDSVREVANFYKISNENIIVIYDDISLDIGRLRIREKGSAGGHNGIKSIIANLSTDVFPRIKVGVGQPNDNLVDYVLGKFSKEEKEVLKESIEAATNSVEEIIKQDINSAMNKFNGFKANKSI.

Tyr14 is a binding site for tRNA. The active-site Proton acceptor is His19. 3 residues coordinate tRNA: Tyr64, Asn66, and Asn112.

This sequence belongs to the PTH family. As to quaternary structure, monomer.

The protein localises to the cytoplasm. The enzyme catalyses an N-acyl-L-alpha-aminoacyl-tRNA + H2O = an N-acyl-L-amino acid + a tRNA + H(+). Hydrolyzes ribosome-free peptidyl-tRNAs (with 1 or more amino acids incorporated), which drop off the ribosome during protein synthesis, or as a result of ribosome stalling. In terms of biological role, catalyzes the release of premature peptidyl moieties from peptidyl-tRNA molecules trapped in stalled 50S ribosomal subunits, and thus maintains levels of free tRNAs and 50S ribosomes. The polypeptide is Peptidyl-tRNA hydrolase (Clostridium botulinum (strain Alaska E43 / Type E3)).